We begin with the raw amino-acid sequence, 347 residues long: tRNA N6-adenosine threonylcarbamoyltransferase (347 aa).

Fe cation contacts are provided by His-117 and His-121. Residues 140-144, Asp-174, Gly-187, Asp-191, and Asn-281 contribute to the substrate site; that span reads LVSGG. Asp-309 provides a ligand contact to Fe cation.

The protein belongs to the KAE1 / TsaD family. Fe(2+) serves as cofactor.

It is found in the cytoplasm. The catalysed reaction is L-threonylcarbamoyladenylate + adenosine(37) in tRNA = N(6)-L-threonylcarbamoyladenosine(37) in tRNA + AMP + H(+). Functionally, required for the formation of a threonylcarbamoyl group on adenosine at position 37 (t(6)A37) in tRNAs that read codons beginning with adenine. Is involved in the transfer of the threonylcarbamoyl moiety of threonylcarbamoyl-AMP (TC-AMP) to the N6 group of A37, together with TsaE and TsaB. TsaD likely plays a direct catalytic role in this reaction. The protein is tRNA N6-adenosine threonylcarbamoyltransferase of Thermobifida fusca (strain YX).